The primary structure comprises 366 residues: Peptide chain release factor 2 (366 aa).

At Gln251 the chain carries N5-methylglutamine.

Belongs to the prokaryotic/mitochondrial release factor family. Post-translationally, methylated by PrmC. Methylation increases the termination efficiency of RF2.

It is found in the cytoplasm. Peptide chain release factor 2 directs the termination of translation in response to the peptide chain termination codons UGA and UAA. In Bacillus subtilis (strain 168), this protein is Peptide chain release factor 2 (prfB).